The following is a 286-amino-acid chain: Phosphatidylserine decarboxylase proenzyme (286 aa).

Catalysis depends on charge relay system; for autoendoproteolytic cleavage activity residues D90, H147, and S252. The active-site Schiff-base intermediate with substrate; via pyruvic acid; for decarboxylase activity is S252. Position 252 is a pyruvic acid (Ser); by autocatalysis (S252).

Belongs to the phosphatidylserine decarboxylase family. PSD-B subfamily. Prokaryotic type I sub-subfamily. Heterodimer of a large membrane-associated beta subunit and a small pyruvoyl-containing alpha subunit. Pyruvate serves as cofactor. Is synthesized initially as an inactive proenzyme. Formation of the active enzyme involves a self-maturation process in which the active site pyruvoyl group is generated from an internal serine residue via an autocatalytic post-translational modification. Two non-identical subunits are generated from the proenzyme in this reaction, and the pyruvate is formed at the N-terminus of the alpha chain, which is derived from the carboxyl end of the proenzyme. The autoendoproteolytic cleavage occurs by a canonical serine protease mechanism, in which the side chain hydroxyl group of the serine supplies its oxygen atom to form the C-terminus of the beta chain, while the remainder of the serine residue undergoes an oxidative deamination to produce ammonia and the pyruvoyl prosthetic group on the alpha chain. During this reaction, the Ser that is part of the protease active site of the proenzyme becomes the pyruvoyl prosthetic group, which constitutes an essential element of the active site of the mature decarboxylase.

The protein localises to the cell membrane. The enzyme catalyses a 1,2-diacyl-sn-glycero-3-phospho-L-serine + H(+) = a 1,2-diacyl-sn-glycero-3-phosphoethanolamine + CO2. The protein operates within phospholipid metabolism; phosphatidylethanolamine biosynthesis; phosphatidylethanolamine from CDP-diacylglycerol: step 2/2. Catalyzes the formation of phosphatidylethanolamine (PtdEtn) from phosphatidylserine (PtdSer). The polypeptide is Phosphatidylserine decarboxylase proenzyme (Pseudomonas fluorescens (strain Pf0-1)).